The chain runs to 55 residues: uncharacterized protein (55 aa).

A helical transmembrane segment spans residues 24–46 (LFIIFFTYSYYYCGFLQSFNYII).

The protein resides in the membrane. This is an uncharacterized protein from Dictyostelium discoideum (Social amoeba).